The following is a 452-amino-acid chain: Enolase (452 aa).

A (2R)-2-phosphoglycerate-binding site is contributed by glutamine 167. Catalysis depends on glutamate 209, which acts as the Proton donor. Positions 250, 307, and 334 each coordinate Mg(2+). Lysine 359, arginine 388, serine 389, and lysine 410 together coordinate (2R)-2-phosphoglycerate. Lysine 359 functions as the Proton acceptor in the catalytic mechanism.

It belongs to the enolase family. Requires Mg(2+) as cofactor.

Its subcellular location is the cytoplasm. The protein resides in the secreted. It localises to the cell surface. It carries out the reaction (2R)-2-phosphoglycerate = phosphoenolpyruvate + H2O. The protein operates within carbohydrate degradation; glycolysis; pyruvate from D-glyceraldehyde 3-phosphate: step 4/5. Functionally, catalyzes the reversible conversion of 2-phosphoglycerate (2-PG) into phosphoenolpyruvate (PEP). It is essential for the degradation of carbohydrates via glycolysis. This chain is Enolase, found in Mesomycoplasma hyopneumoniae (strain 232) (Mycoplasma hyopneumoniae).